The following is an 829-amino-acid chain: Dipeptidyl peptidase family member 2 (829 aa).

Residues 1-27 (MENDNYDVEEQGCSVFNGKHGYFARSC) are Cytoplasmic-facing. Residues 28-48 (CVVFILIICVIFVFSVIFTFM) traverse the membrane as a helical; Signal-anchor for type II membrane protein segment. Residues 49-829 (QNPINLNSDN…DCFKSNLDLL (781 aa)) lie on the Extracellular side of the membrane. Residues Asn-61, Asn-66, Asn-183, Asn-209, Asn-314, and Asn-359 are each glycosylated (N-linked (GlcNAc...) asparagine). A disulfide bond links Cys-514 and Cys-533. Ser-691 (charge relay system) is an active-site residue. A disulfide bridge connects residues Cys-711 and Cys-821. The N-linked (GlcNAc...) asparagine glycan is linked to Asn-754. Residues Asp-768 and His-800 each act as charge relay system in the active site.

This sequence belongs to the peptidase S9B family. DPPIV subfamily.

It is found in the cell membrane. Removes N-terminal dipeptides sequentially from polypeptides. Essential for control of distal tip cell migration. In Caenorhabditis elegans, this protein is Dipeptidyl peptidase family member 2 (dpf-2).